The chain runs to 294 residues: Fatty acyl-CoA reductase Rv0547c (294 aa).

Positions 49, 50, 52, 72, 97, 98, 124, 192, 196, 225, and 227 each coordinate NADP(+). The active-site Proton acceptor is Tyr192.

It belongs to the short-chain dehydrogenases/reductases (SDR) family.

Its subcellular location is the host mitochondrion. The enzyme catalyses hexadecanal + NADP(+) + CoA = hexadecanoyl-CoA + NADPH + H(+). In terms of biological role, oxidoreductase that promotes the persistence of M.tuberculosis in host macrophages by reprogramming the fatty acid metabolism in host mitochondria. When localized in the host mitochondria, it potentially acts on unknown lipid substrates and converts them into products that directly or indirectly alter the lipid profile of the mitochondria. This change in lipid profile results in increased mitochondrial membrane fluidity, enhanced endogenous fatty acid oxidation and increased mitochondrial spare respiratory capacity. All these events eventually favor M.tuberculosis persistence in the host macrophages. In vitro, can catalyze the NADPH-dependent reduction of palmitoyl-CoA (hexadecanoyl-CoA). This is Fatty acyl-CoA reductase Rv0547c from Mycobacterium tuberculosis (strain ATCC 25618 / H37Rv).